A 534-amino-acid polypeptide reads, in one-letter code: Fimbrial subunit type 2 (534 aa).

The signal sequence occupies residues 1-32 (MKYNTSTLGRRAAAAAGVLTLAVLGLAPMAQA). Disordered stretches follow at residues 56 to 76 (GDGNPIGAPDGTASNDDGKGA) and 329 to 376 (TYAE…DKDG). Pro residues predominate over residues 334-347 (PPAPETPPANPDNP). The span at 361–376 (TIKKVDGNDRSGDKDG) shows a compositional bias: basic and acidic residues. Residues 492–496 (LPLTG) carry the LPXTG sorting signal motif. Threonine 495 bears the Pentaglycyl murein peptidoglycan amidated threonine mark. The propeptide at 496–534 (GANGMLILTASGAALLMIAVGSVLVARYRERKRNRDLAA) is removed by sortase.

It is found in the secreted. The protein localises to the cell wall. The protein resides in the fimbrium. In terms of biological role, major fimbrial subunit of A.naeslundii. This is Fimbrial subunit type 2 from Actinomyces naeslundii.